The following is a 407-amino-acid chain: MEGWRGAWYVPCLASHETLQELCRKENLRCKSIGITNKSLKSYEVEYLCDYKVEEGKEYYLVKWKGWPESSNTWEPQKNLKCPKLLENFLSDKDEYLSRMKEGRALKVRNSVKALKPAVADYIVKKAKQRIALQRWKEELNRKKNHKGMILVENTVDLEGPPIDFYYINEYKPAPGINVINGITTGCECSDCPAEKCCPKEAGFILAYNKQKKLKIQPGLPIYECNSFCRCGPDCPNRIVQKGTQYSLCIFRTNNGRGWGVKTLQKIKTNSFVMEYVGEVITSEEAERRGQFYDNQGNTYLFDLDYDSDEFTVDAARYGNVSHFVNHSCDPNLQVFNVFIDNLDLRLPRIALFSTRTIKAGEELTFDYQMKGSIDLTSDSADGLSSSRKRIRTVCKCGAVCCRGYLN.

Residues 43 to 101 (YEVEYLCDYKVEEGKEYYLVKWKGWPESSNTWEPQKNLKCPKLLENFLSDKDEYLSRMK) form the Chromo domain. The Pre-SET domain occupies 185–243 (TGCECSDCPAEKCCPKEAGFILAYNKQKKLKIQPGLPIYECNSFCRCGPDCPNRIVQKG). Positions 187, 189, 192, 197, 198, 225, 229, 231, and 235 each coordinate Zn(2+). One can recognise an SET domain in the interval 246–369 (YSLCIFRTNN…AGEELTFDYQ (124 aa)). Residues 257-259 (RGW), Tyr300, and 326-327 (NH) each bind S-adenosyl-L-methionine. Residues Cys329, Cys395, Cys397, and Cys402 each coordinate Zn(2+). Positions 391–407 (IRTVCKCGAVCCRGYLN) constitute a Post-SET domain.

The protein belongs to the class V-like SAM-binding methyltransferase superfamily. Histone-lysine methyltransferase family. Suvar3-9 subfamily.

It is found in the nucleus. It localises to the chromosome. The protein resides in the centromere. It carries out the reaction L-lysyl(9)-[histone H3] + 3 S-adenosyl-L-methionine = N(6),N(6),N(6)-trimethyl-L-lysyl(9)-[histone H3] + 3 S-adenosyl-L-homocysteine + 3 H(+). In terms of biological role, histone methyltransferase that specifically trimethylates 'Lys-9' of histone H3 using monomethylated H3 'Lys-9' as substrate. H3 'Lys-9' trimethylation represents a specific tag for epigenetic transcriptional repression by recruiting HP1 (CBX1, CBX3 and/or CBX5) proteins to methylated histones. Mainly functions in heterochromatin regions, thereby playing a central role in the establishment of constitutive heterochromatin at pericentric and telomere regions. H3 'Lys-9' trimethylation is also required to direct DNA methylation at pericentric repeats. SUV39H1 is targeted to histone H3 via its interaction with RB1 and is involved in many processes. The chain is Histone-lysine N-methyltransferase SUV39H2 (SUV39H2) from Gallus gallus (Chicken).